Reading from the N-terminus, the 406-residue chain is Lysosome-associated membrane glycoprotein 1 (406 aa).

An N-terminal signal peptide occupies residues 1-24 (MAAPGARRPLLLLLLAGLAHGASA). Residues 25 to 188 (LFEVKNNGTT…SKEETHCTQD (164 aa)) form a first lumenal domain region. At 25 to 370 (LFEVKNNGTT…VEECVQDGNN (346 aa)) the chain is on the lumenal side. Asn31, Asn52, Asn58, Asn70, Asn78, Asn97, Asn101, Asn115, Asn159, and Asn177 each carry an N-linked (GlcNAc...) asparagine glycan. Cysteines 35 and 74 form a disulfide. Cys149 and Cys185 are oxidised to a cystine. Residues 180–207 (KEETHCTQDGPSPTTGPPSPSPPLVPTN) are disordered. The tract at residues 189 to 218 (GPSPTTGPPSPSPPLVPTNPTVSKYNVTGN) is hinge. A compositionally biased stretch (pro residues) spans 193–205 (TTGPPSPSPPLVP). 4 N-linked (GlcNAc...) asparagine glycosylation sites follow: Asn214, Asn219, Asn232, and Asn240. The second lumenal domain stretch occupies residues 219-370 (NGTCLLASMA…VEECVQDGNN (152 aa)). A disulfide bridge connects residues Cys222 and Cys259. A glycan (N-linked (GlcNAc...) (high mannose) asparagine) is linked at Asn252. N-linked (GlcNAc...) asparagine glycosylation is found at Asn282, Asn296, and Asn311. Residues Cys327 and Cys364 are joined by a disulfide bond. The chain crosses the membrane as a helical span at residues 371-394 (MLIPIAVGGALAGLVLIVLIAYLI). Topologically, residues 395–406 (GRKRSHAGYQTI) are cytoplasmic.

The protein belongs to the LAMP family. In terms of assembly, interacts with ABCB9; this interaction strongly stabilizes ABCB9 and protects ABCB9 against lysosomal degradation. Interacts with FURIN. Interacts with TMEM175; inhibiting the proton channel activity of TMEM175. In terms of processing, O- and N-glycosylated; some of the N-glycans attached to LAMP-1 are polylactosaminoglycans.

The protein localises to the lysosome membrane. It is found in the endosome membrane. The protein resides in the late endosome membrane. Its subcellular location is the cell membrane. It localises to the cytolytic granule membrane. Its function is as follows. Lysosomal membrane glycoprotein which plays an important role in lysosome biogenesis, lysosomal pH regulation, autophagy and cholesterol homeostasis. Acts as an important regulator of lysosomal lumen pH regulation by acting as a direct inhibitor of the proton channel TMEM175, facilitating lysosomal acidification for optimal hydrolase activity. Also plays an important role in NK-cells cytotoxicity. Mechanistically, participates in cytotoxic granule movement to the cell surface and perforin trafficking to the lytic granule. In addition, protects NK-cells from degranulation-associated damage induced by their own cytotoxic granule content. Presents carbohydrate ligands to selectins. Also implicated in tumor cell metastasis. The protein is Lysosome-associated membrane glycoprotein 1 (Lamp1) of Mus musculus (Mouse).